Reading from the N-terminus, the 465-residue chain is uncharacterized protein (465 aa).

Disordered stretches follow at residues 1 to 55 (MNSS…SSHQ), 70 to 164 (DFSE…VEGQ), and 221 to 313 (TTDN…KQRV). Positions 40-50 (ENYKDNSDHSN) are enriched in basic and acidic residues. The span at 73-82 (ESFNDNQNLK) shows a compositional bias: polar residues. Positions 83–134 (NFNTTDNNFNDDYNNDYDSNNDSNNDSNNDSNNDYDNESNNYFNNDSNNDSN) are enriched in low complexity. Positions 141–150 (ETTKHKLPIE) are enriched in basic and acidic residues. Low complexity predominate over residues 221-235 (TTDNQSNTESSQENN). Basic and acidic residues-rich tracts occupy residues 236–249 (VIKKEPNNKLDKQP) and 259–275 (IVPKQETDKKSPVKSIK). A compositionally biased stretch (polar residues) spans 288–306 (IDQSNKLGKSYNTNNNNSK). Residues 390-423 (NKASIAELKKMRLEQRKREIEEKRRQVENKKPDS) are a coiled coil.

This is an uncharacterized protein from Acanthamoeba polyphaga mimivirus (APMV).